The sequence spans 258 residues: Imidazole glycerol phosphate synthase subunit HisF (258 aa).

Residues D11 and D130 contribute to the active site.

It belongs to the HisA/HisF family. As to quaternary structure, heterodimer of HisH and HisF.

It localises to the cytoplasm. It catalyses the reaction 5-[(5-phospho-1-deoxy-D-ribulos-1-ylimino)methylamino]-1-(5-phospho-beta-D-ribosyl)imidazole-4-carboxamide + L-glutamine = D-erythro-1-(imidazol-4-yl)glycerol 3-phosphate + 5-amino-1-(5-phospho-beta-D-ribosyl)imidazole-4-carboxamide + L-glutamate + H(+). The protein operates within amino-acid biosynthesis; L-histidine biosynthesis; L-histidine from 5-phospho-alpha-D-ribose 1-diphosphate: step 5/9. In terms of biological role, IGPS catalyzes the conversion of PRFAR and glutamine to IGP, AICAR and glutamate. The HisF subunit catalyzes the cyclization activity that produces IGP and AICAR from PRFAR using the ammonia provided by the HisH subunit. In Salmonella arizonae (strain ATCC BAA-731 / CDC346-86 / RSK2980), this protein is Imidazole glycerol phosphate synthase subunit HisF.